Reading from the N-terminus, the 593-residue chain is Monoterpene synthase 7, chloroplastic (593 aa).

The N-terminal 39 residues, 1–39, are a transit peptide targeting the chloroplast; that stretch reads MSVSLSFAASATFGFRGGLGGFSRPAAAIKQWRCLPRIQ. 4 residues coordinate Mg(2+): Asp348, Asp352, Asp491, and Glu499. The short motif at 348-352 is the DDXXD motif element; sequence DDVYD.

Belongs to the terpene synthase family. Tpsa subfamily. Mg(2+) serves as cofactor. Requires Mn(2+) as cofactor. In terms of tissue distribution, highly expressed in flowers, petals and sepals, but almost undetectable in vegetative organs.

It localises to the plastid. Its subcellular location is the chloroplast. The enzyme catalyses (2E)-geranyl diphosphate = sabinene + diphosphate. The catalysed reaction is (2E)-geranyl diphosphate = terpinolene + diphosphate. It catalyses the reaction (2E)-geranyl diphosphate = alpha-pinene + diphosphate. It carries out the reaction (2E)-geranyl diphosphate = beta-pinene + diphosphate. The enzyme catalyses (2E)-geranyl diphosphate = beta-myrcene + diphosphate. The catalysed reaction is (2E)-geranyl diphosphate = alpha-terpinene + diphosphate. It catalyses the reaction (2E)-geranyl diphosphate = beta-phellandrene + diphosphate. It carries out the reaction (2E)-geranyl diphosphate = gamma-terpinene + diphosphate. The protein operates within secondary metabolite biosynthesis; terpenoid biosynthesis. In terms of biological role, monoterpene synthase involved in the biosynthesis of volatile compounds present in floral scent. Mediates the conversion of (2E)-geranyl diphosphate (GPP) into sabinene and sub-products such as alpha-thujene, alpha-pinene, beta-pinene, myrcene, alpha-phellandrene, alpha-terpinene, beta-phellandrene, gamma-terpinene and terpinolene. Unable to use farnesyl diphosphate (FPP) as substrate. This chain is Monoterpene synthase 7, chloroplastic, found in Hedychium coronarium (White butterfly ginger-lily).